A 212-amino-acid chain; its full sequence is Phosphatidylserine decarboxylase proenzyme (212 aa).

The Schiff-base intermediate with substrate; via pyruvic acid role is filled by S182. The residue at position 182 (S182) is a Pyruvic acid (Ser); by autocatalysis.

This sequence belongs to the phosphatidylserine decarboxylase family. PSD-A subfamily. As to quaternary structure, heterodimer of a large membrane-associated beta subunit and a small pyruvoyl-containing alpha subunit. Pyruvate is required as a cofactor. Is synthesized initially as an inactive proenzyme. Formation of the active enzyme involves a self-maturation process in which the active site pyruvoyl group is generated from an internal serine residue via an autocatalytic post-translational modification. Two non-identical subunits are generated from the proenzyme in this reaction, and the pyruvate is formed at the N-terminus of the alpha chain, which is derived from the carboxyl end of the proenzyme. The post-translation cleavage follows an unusual pathway, termed non-hydrolytic serinolysis, in which the side chain hydroxyl group of the serine supplies its oxygen atom to form the C-terminus of the beta chain, while the remainder of the serine residue undergoes an oxidative deamination to produce ammonia and the pyruvoyl prosthetic group on the alpha chain.

It localises to the cell membrane. It catalyses the reaction a 1,2-diacyl-sn-glycero-3-phospho-L-serine + H(+) = a 1,2-diacyl-sn-glycero-3-phosphoethanolamine + CO2. It functions in the pathway phospholipid metabolism; phosphatidylethanolamine biosynthesis; phosphatidylethanolamine from CDP-diacylglycerol: step 2/2. In terms of biological role, catalyzes the formation of phosphatidylethanolamine (PtdEtn) from phosphatidylserine (PtdSer). The chain is Phosphatidylserine decarboxylase proenzyme from Paraburkholderia phytofirmans (strain DSM 17436 / LMG 22146 / PsJN) (Burkholderia phytofirmans).